Here is a 447-residue protein sequence, read N- to C-terminus: Cysteine--tRNA ligase (447 aa).

C28 lines the Zn(2+) pocket. The 'HIGH' region motif lies at P30–N40. Zn(2+) is bound by residues C211, H236, and E240. The 'KMSKS' region signature appears at K268–S272. K271 serves as a coordination point for ATP.

Belongs to the class-I aminoacyl-tRNA synthetase family. Monomer. The cofactor is Zn(2+).

It is found in the cytoplasm. The catalysed reaction is tRNA(Cys) + L-cysteine + ATP = L-cysteinyl-tRNA(Cys) + AMP + diphosphate. The protein is Cysteine--tRNA ligase of Streptococcus pyogenes serotype M28 (strain MGAS6180).